The following is a 308-amino-acid chain: Dual oxidase maturation factor 1 (308 aa).

Residues 1-21 (MQANIFPFYPQPRTPFKFDTK) lie on the Extracellular side of the membrane. A helical membrane pass occupies residues 22 to 42 (IIEIIIICIVTACTFIIILPG). The Cytoplasmic portion of the chain corresponds to 43–49 (IRGKSRS). The helical transmembrane segment at 50–70 (IWLLRILTSLFIGAVILAVNF) threads the bilayer. Residues 71–91 (TSDWEMGTITATTVYKSFSHS) lie on the Extracellular side of the membrane. A helical transmembrane segment spans residues 92–112 (MLNASIGLWIGLKGLNITLIG). Residues 113-175 (NPEYQLNETI…GLFQQYCIST (63 aa)) are Cytoplasmic-facing. The helical transmembrane segment at 176-198 (YYSSGIMWIAFCSWILYNVLFSM) threads the bilayer. A topological domain (extracellular) is located at residue P199. The helical transmembrane segment at 200-220 (VILYGIYMMFVTAICMLVSLI) threads the bilayer. Over 221 to 247 (SFASVRKAPVCNIQFGNSILKTHFGVS) the chain is Cytoplasmic. Residues 248–268 (YWLSLITGLLCLIISLVLLFL) form a helical membrane-spanning segment. The Extracellular segment spans residues 269–308 (YKTQPKVLQLIFSYGEEEDLSNKSENEEEHSSVLSLNEIL). N290 carries an N-linked (GlcNAc...) asparagine glycan.

This sequence belongs to the DUOXA family.

The protein resides in the membrane. Its function is as follows. Possible role in maturation and transport from the endoplasmic reticulum to the plasma membrane of functional dual oxidase. The protein is Dual oxidase maturation factor 1 (duoxa1) of Xenopus laevis (African clawed frog).